A 60-amino-acid chain; its full sequence is UPF0181 protein ESA_01442 (60 aa).

It belongs to the UPF0181 family.

The protein is UPF0181 protein ESA_01442 of Cronobacter sakazakii (strain ATCC BAA-894) (Enterobacter sakazakii).